A 90-amino-acid polypeptide reads, in one-letter code: UPF0297 protein BH1268 (90 aa).

It belongs to the UPF0297 family.

This chain is UPF0297 protein BH1268, found in Halalkalibacterium halodurans (strain ATCC BAA-125 / DSM 18197 / FERM 7344 / JCM 9153 / C-125) (Bacillus halodurans).